A 551-amino-acid chain; its full sequence is MFVVRRSIVFQQSRRQFSGSIAWLQACSSCGIKLQSKNPALIGYYTKPKPLEVGKVETLEDVKYMLFSQDIQKIKEIEDGTTLEDEKNRIPHSLICKRCSDAVHQNKYDVMDFKNCSLKEVIRSVPNDKPIVSIASLPEFPFHVNKNILENEKESVLVFTKADQVLKTSSATSTRLPIFFKDYFKYHLGLQVNKVLAVSSLKKWNLSGLLSNLRNNSYFLGNPNVGKSTLMNSLIQRYNGTKLDFNSNISDDMVNDAQHKHLRKAQLAGVSHIPNLTRECQGYQVDKKRIYDLPGYSENVDELPLERIVKSNWLEWVRKTNLFDTKKVKKKPYITIKGTENGRCYTIGGLFFLQPPPYSINQIIKFIPGEPYIFKNVTRALETFKSVYGNDTPHPLEKYCGINDEYCDITKYQRHVIPPFQGSIEIVFKDIGYILLRSTGRYSFNGLYEIWVPKGISVCIREPLEKLIEEGYVQYTESKNKISSCPKGRPLVSSTYIMDPNEEDTFAKIREMYLDRTENEISVRRLVKEDPLEVVSNKHDTPPNLYWHYKW.

Residues Met-1 to Leu-24 constitute a mitochondrion transit peptide. Residues Leu-118 to Asn-299 form the CP-type G domain.

Belongs to the TRAFAC class YlqF/YawG GTPase family. GEP3 subfamily.

It is found in the mitochondrion. Its function is as follows. May be involved in the mitochondrial lipid metabolism. This Vanderwaltozyma polyspora (strain ATCC 22028 / DSM 70294 / BCRC 21397 / CBS 2163 / NBRC 10782 / NRRL Y-8283 / UCD 57-17) (Kluyveromyces polysporus) protein is Genetic interactor of prohibitins 3, mitochondrial (GEP3).